Reading from the N-terminus, the 544-residue chain is MGSDGSSLSPKVSQPGHTEIVDHVSEKVITNGKNVNKKVNAEVDGKSMVEKVKTHEENAEDYHYGGYHPVYIGEEFHHRRYVVERKLGWGHFSTVWLAYDRAAKRRVALKVVRSAEHYRETSIDEIRILQKIREGDEKHLGKKHIISLLDYFVHRGPNGAHVCMVFEVLGENLLSLIQSYGHRGVPVGIVKQIAYQLLIALDYLHRECGIIHTDLKPENVLICIDQDALQHIEAPATTSSPTSNTSSSKTRNNTGYTAKAPIIKRGQSVDNSAQERKTFAKNPTKNSKPAGQVIPSSPFTSTLSRFPSLEGAVSEISLRDSQKHNSHPNSPFSSGDNSLILDGVNGSQEPVPKITVKIADLGNACWTRKHFTNDVQTRQYRSPEVILGCRWGASADCWSFACIIFELLTGDYLFDPRNGNSYSKEDDHIAQIIELLVNYPKQMALSGKHSRDLFNRRGELRNIHKLKFWPLKDVLEQKYHFSAELAQQISDFLSPMLCFDPAKRTNAGYMSNSPWLREVADPTFKIETTGATGEDVPGWATEIR.

The 436-residue stretch at tyrosine 81–leucine 516 folds into the Protein kinase domain. ATP contacts are provided by residues leucine 87 to valine 95 and lysine 110. Aspartate 214 (proton acceptor) is an active-site residue. 2 disordered regions span residues proline 235–phenylalanine 299 and isoleucine 316–leucine 341. Residues threonine 237–threonine 254 show a composition bias toward low complexity. Composition is skewed to polar residues over residues lysine 281 to phenylalanine 299 and histidine 327 to asparagine 337.

The protein belongs to the protein kinase superfamily. Ser/Thr protein kinase family. Phosphorylated on Ser residue(s).

It is found in the cytoplasm. Its subcellular location is the nucleus. The enzyme catalyses L-seryl-[protein] + ATP = O-phospho-L-seryl-[protein] + ADP + H(+). It carries out the reaction L-threonyl-[protein] + ATP = O-phospho-L-threonyl-[protein] + ADP + H(+). May play an important role in mitotic control by altering cellular location, degree of phosphorylation and kinase activity. Abundant expression accelerates the exit when cells are in M-phase and also delays the entry into mitosis when cells are in G2. Phosphorylates prp2 in vitro and so may have a role in co-ordinating pre-mRNA splicing with the progression of the cell division cycle. This Schizosaccharomyces pombe (strain 972 / ATCC 24843) (Fission yeast) protein is Protein kinase dsk1 (dsk1).